The chain runs to 419 residues: MVARFENQAPENLHGKYQAMVVCCILGIGSLVSWNSLLSVGDYYYQVFPDYHPSRVLTFVYQPFSIGTIVIFAYNESKINTRKRNLIGYIVFTTSIFLLIILDLATKGHGGIGPYIVLCAIVGSFGFADASVRGGMIGDLSLMCPELIQSFVAGLAVAGALTSAFRLITKAAFEKTHDGLRKGAMIFLAISTLVEFLCVLLYAYVFPKLPIVKYYRSKAASEGSKTVYADLAAAGIQNQSVLTADDVSKDKRLNNKELLLENVDYVVNLFLIYVLTLSILPGFLYENTGQHGLGSWYALVLIAMYNWWDLVGRYIPMVKWLNVENRKGLTVAVLTRFLLVPAFYFTAKYGDQGWMILLVSILGLTNGHLTVCILAKAPRGYTGPEKNALGNLLVLFILWGAFVGCALGWLWLIGKKNAF.

The next 11 membrane-spanning stretches (helical) occupy residues 20–40 (MVVC…LLSV), 56–76 (VLTF…AYNE), 86–106 (LIGY…DLAT), 108–128 (GHGG…FGFA), 142–162 (LMCP…GALT), 186–206 (IFLA…AYVF), 265–285 (YVVN…GFLY), 292–312 (GLGS…DLVG), 327–347 (KGLT…YFTA), 354–374 (WMIL…VCIL), and 393–413 (LVLF…LWLI).

Belongs to the SLC29A/ENT transporter (TC 2.A.57) family.

Its subcellular location is the cell membrane. In terms of biological role, may be involved in nucleoside transport. This chain is Equilibrative nucleotide transporter 5 (ENT5), found in Arabidopsis thaliana (Mouse-ear cress).